We begin with the raw amino-acid sequence, 153 residues long: MSQARTLHRLIAPAVEALGFELVGCELFRRGATTILQVFVDKPGGIGLDECAKVSRQISAVLDVEDPIRGRYTLEVSSPGLERPLYTANHYRRFIGNKAKIRLREPREGQRQFRGMVVAVDNEEQVTLQLDNKILKVSLGEIEKANLIADFEG.

This sequence belongs to the RimP family.

It is found in the cytoplasm. Required for maturation of 30S ribosomal subunits. In Coxiella burnetii (strain RSA 331 / Henzerling II), this protein is Ribosome maturation factor RimP.